Here is a 513-residue protein sequence, read N- to C-terminus: ATP synthase subunit alpha 2 (513 aa).

152 to 159 (GDSKTGKT) provides a ligand contact to ATP.

This sequence belongs to the ATPase alpha/beta chains family. As to quaternary structure, F-type ATPases have 2 components, CF(1) - the catalytic core - and CF(0) - the membrane proton channel. CF(1) has five subunits: alpha(3), beta(3), gamma(1), delta(1), epsilon(1). CF(0) has three main subunits: a(1), b(2) and c(9-12). The alpha and beta chains form an alternating ring which encloses part of the gamma chain. CF(1) is attached to CF(0) by a central stalk formed by the gamma and epsilon chains, while a peripheral stalk is formed by the delta and b chains.

The protein localises to the cell membrane. It catalyses the reaction ATP + H2O + 4 H(+)(in) = ADP + phosphate + 5 H(+)(out). Its function is as follows. Produces ATP from ADP in the presence of a proton gradient across the membrane. The alpha chain is a regulatory subunit. In Mycoplasmopsis pulmonis (strain UAB CTIP) (Mycoplasma pulmonis), this protein is ATP synthase subunit alpha 2.